A 285-amino-acid polypeptide reads, in one-letter code: MNSFRFTKMHGLGNSYIYVNQFEEHLPEELLSDLAVKVSSVYTGIGSDGMILICPSDRAPVKMRIFNSDGSEGKNCGNGLRCVAKYAYEHKLVEETSFLIETLSGLVKAQVEVDEGKVVSATVDMGEPRLLKSDMPMRGEQGSETINEKMIFGGREMKGTAVSMGNPHIVFYLDDIEKAPLTTMGPLIEKDERFPEGVNVEFVEVENENELHFRVWERGSGITQACGTGACAAAVSSVLNGYSKRDTDITVHLAGGDLIINWKNDGRVMMTGPAETVCEGEFFIS.

Substrate contacts are provided by N14 and N67. C76 serves as the catalytic Proton donor. Substrate contacts are provided by residues 77–78, N166, N199, and 217–218; these read GN and ER. Catalysis depends on C226, which acts as the Proton acceptor. Residue 227–228 participates in substrate binding; sequence GT.

This sequence belongs to the diaminopimelate epimerase family. As to quaternary structure, homodimer.

It localises to the cytoplasm. The enzyme catalyses (2S,6S)-2,6-diaminopimelate = meso-2,6-diaminopimelate. The protein operates within amino-acid biosynthesis; L-lysine biosynthesis via DAP pathway; DL-2,6-diaminopimelate from LL-2,6-diaminopimelate: step 1/1. Functionally, catalyzes the stereoinversion of LL-2,6-diaminopimelate (L,L-DAP) to meso-diaminopimelate (meso-DAP), a precursor of L-lysine and an essential component of the bacterial peptidoglycan. The protein is Diaminopimelate epimerase of Bacillus licheniformis (strain ATCC 14580 / DSM 13 / JCM 2505 / CCUG 7422 / NBRC 12200 / NCIMB 9375 / NCTC 10341 / NRRL NRS-1264 / Gibson 46).